A 383-amino-acid chain; its full sequence is Lipid-A-disaccharide synthase (383 aa).

The protein belongs to the LpxB family.

The enzyme catalyses 2-N,3-O-bis[(3R)-3-hydroxytetradecanoyl]-alpha-D-glucosaminyl 1-phosphate + UDP-2-N,3-O-bis[(3R)-3-hydroxytetradecanoyl]-alpha-D-glucosamine = lipid A disaccharide (E. coli) + UDP + H(+). The catalysed reaction is a lipid X + a UDP-2-N,3-O-bis[(3R)-3-hydroxyacyl]-alpha-D-glucosamine = a lipid A disaccharide + UDP + H(+). It participates in glycolipid biosynthesis; lipid IV(A) biosynthesis; lipid IV(A) from (3R)-3-hydroxytetradecanoyl-[acyl-carrier-protein] and UDP-N-acetyl-alpha-D-glucosamine: step 5/6. Its function is as follows. Condensation of UDP-2,3-diacylglucosamine and 2,3-diacylglucosamine-1-phosphate to form lipid A disaccharide, a precursor of lipid A, a phosphorylated glycolipid that anchors the lipopolysaccharide to the outer membrane of the cell. In Pectobacterium atrosepticum (strain SCRI 1043 / ATCC BAA-672) (Erwinia carotovora subsp. atroseptica), this protein is Lipid-A-disaccharide synthase.